The primary structure comprises 237 residues: Myb-related protein MYBAS1 (237 aa).

HTH myb-type domains lie at 5–57 and 58–112; these read REEM…VNYL and HPGL…RKKA. The segment at residues 33 to 57 is a DNA-binding region (H-T-H motif); that stretch reads WDFVAKVSGLNRTGKSCRLRWVNYL. The short motif at 62–65 is the Bipartite nuclear localization signal 1 element; that stretch reads KHGR. Residues 85 to 108 constitute a DNA-binding region (H-T-H motif); the sequence is WSRIARRLPGRTDNEIKNYWRTHM. The Bipartite nuclear localization signal 2 motif lies at 109–117; it reads RKKAQERRG.

It localises to the nucleus. Its function is as follows. Transcription factor. The protein is Myb-related protein MYBAS1 (MYBAS1) of Oryza sativa subsp. japonica (Rice).